A 398-amino-acid chain; its full sequence is Succinate--CoA ligase [ADP-forming] subunit beta (398 aa).

The region spanning 9–253 (KQVLAKYGVA…ESEEDPAELE (245 aa)) is the ATP-grasp domain. ATP is bound by residues K46, 53 to 55 (GRG), E108, C111, and E116. N208 and D222 together coordinate Mg(2+). Substrate contacts are provided by residues N273 and 330-332 (GIM).

It belongs to the succinate/malate CoA ligase beta subunit family. As to quaternary structure, heterotetramer of two alpha and two beta subunits. Requires Mg(2+) as cofactor.

The enzyme catalyses succinate + ATP + CoA = succinyl-CoA + ADP + phosphate. It carries out the reaction GTP + succinate + CoA = succinyl-CoA + GDP + phosphate. It functions in the pathway carbohydrate metabolism; tricarboxylic acid cycle; succinate from succinyl-CoA (ligase route): step 1/1. Its function is as follows. Succinyl-CoA synthetase functions in the citric acid cycle (TCA), coupling the hydrolysis of succinyl-CoA to the synthesis of either ATP or GTP and thus represents the only step of substrate-level phosphorylation in the TCA. The beta subunit provides nucleotide specificity of the enzyme and binds the substrate succinate, while the binding sites for coenzyme A and phosphate are found in the alpha subunit. The sequence is that of Succinate--CoA ligase [ADP-forming] subunit beta from Paramagnetospirillum magneticum (strain ATCC 700264 / AMB-1) (Magnetospirillum magneticum).